Reading from the N-terminus, the 318-residue chain is Glutathione synthetase (318 aa).

The 185-residue stretch at lysine 133 to phenylalanine 317 folds into the ATP-grasp domain. Valine 159–glycine 215 contacts ATP. Positions 288 and 290 each coordinate Mg(2+).

Belongs to the prokaryotic GSH synthase family. It depends on Mg(2+) as a cofactor. The cofactor is Mn(2+).

It carries out the reaction gamma-L-glutamyl-L-cysteine + glycine + ATP = glutathione + ADP + phosphate + H(+). It participates in sulfur metabolism; glutathione biosynthesis; glutathione from L-cysteine and L-glutamate: step 2/2. This is Glutathione synthetase from Thermosynechococcus vestitus (strain NIES-2133 / IAM M-273 / BP-1).